The following is a 330-amino-acid chain: GTPase Obg (330 aa).

An Obg domain is found at 1 to 159 (MHFIDEVKIY…MWIHLSLKLL (159 aa)). In terms of domain architecture, OBG-type G spans 160–327 (SDVGLVGLPN…IVKLALETIK (168 aa)). GTP-binding positions include 166–173 (GLPNAGKS), 191–195 (FTTLV), 212–215 (DIPG), 279–282 (NKCD), and 308–310 (STC). The Mg(2+) site is built by Ser-173 and Thr-193.

Belongs to the TRAFAC class OBG-HflX-like GTPase superfamily. OBG GTPase family. As to quaternary structure, monomer. Requires Mg(2+) as cofactor.

It localises to the cytoplasm. In terms of biological role, an essential GTPase which binds GTP, GDP and possibly (p)ppGpp with moderate affinity, with high nucleotide exchange rates and a fairly low GTP hydrolysis rate. Plays a role in control of the cell cycle, stress response, ribosome biogenesis and in those bacteria that undergo differentiation, in morphogenesis control. The sequence is that of GTPase Obg from Rickettsia rickettsii (strain Iowa).